Reading from the N-terminus, the 334-residue chain is Procathepsin L (334 aa).

The first 17 residues, 1–17 (MNLLLLLAVLCLGTALA), serve as a signal peptide directing secretion. The propeptide at 18 to 113 (TPKFDQTFSA…RLFQEPLMLK (96 aa)) is activation peptide. E122 serves as a coordination point for Zn(2+). Disulfide bonds link C135–C178 and C169–C211. C138 is an active-site residue. Residues E163, D184, E199, and E205 each contribute to the Zn(2+) site. Residue N221 is glycosylated (N-linked (GlcNAc...) (high mannose) asparagine). Residues D227, D250, H253, and D275 each coordinate Zn(2+). An intrachain disulfide couples C269 to C322. Residue H276 is part of the active site. The propeptide occupies 289 to 290 (DS). N300 is a catalytic residue.

Belongs to the peptidase C1 family. As to quaternary structure, dimer of a heavy and a light chain linked by disulfide bonds. Interacts with Long isoform of CD74/Ii chain; the interaction stabilizes the conformation of mature CTSL. Post-translationally, during export along the endocytic pathway, pro-CTSL undergoes several proteolytic cleavages to generate the CTSL single-chain and two-chain mature forms, composed of a heavy chain linked to a light chain by disulfide bonds. Autocleavage; produces the single-chain CTSL after cleavage of the propeptide. The cleavage can be intermolecular. In terms of tissue distribution, expressed in thymus, kidney and liver. Expressed in thyroid epithelial cells. Expressed in cortical thymic epithelial cells. Expressed by antigen presenting cells (APCs) such as dendritic cells and macrophages.

Its subcellular location is the lysosome. It is found in the apical cell membrane. The protein localises to the secreted. The protein resides in the extracellular space. It localises to the cytoplasmic vesicle. Its subcellular location is the secretory vesicle. It is found in the chromaffin granule. The catalysed reaction is Specificity close to that of papain. As compared to cathepsin B, cathepsin L exhibits higher activity toward protein substrates, but has little activity on Z-Arg-Arg-NHMec, and no peptidyl-dipeptidase activity.. With respect to regulation, long isoform of CD74/Ii chain stabilizes the conformation of mature CTSL by binding to its active site and serving as a chaperone to help maintain a pool of mature enzyme in endocytic compartments and extracellular space of APCs. IFNG enhances the conversion into the CTSL mature and active form. Inhibited by CST6. Inhibited by the glycopeptide antibiotic teicoplanin. Inhibited by amantadine. Its function is as follows. Thiol protease important for the overall degradation of proteins in lysosomes. Involved in the solubilization of cross-linked TG/thyroglobulin and in the subsequent release of thyroid hormone thyroxine (T4) by limited proteolysis of TG/thyroglobulin in the thyroid follicle lumen. In neuroendocrine chromaffin cells secretory vesicles, catalyzes the prohormone proenkephalin processing to the active enkephalin peptide neurotransmitter. In thymus, regulates CD4(+) T cell positive selection by generating the major histocompatibility complex class II (MHCII) bound peptide ligands presented by cortical thymic epithelial cells. Also mediates invariant chain processing in cortical thymic epithelial cells. Major elastin-degrading enzyme at neutral pH. Accumulates as a mature and active enzyme in the extracellular space of antigen presenting cells (APCs) to regulate degradation of the extracellular matrix in the course of inflammation. Secreted form generates endostatin from COL18A1. Critical for cardiac morphology and function. Plays an important role in hair follicle morphogenesis and cycling, as well as epidermal differentiation. Required for maximal stimulation of steroidogenesis by TIMP1. This is Procathepsin L from Mus musculus (Mouse).